Here is a 327-residue protein sequence, read N- to C-terminus: Pyruvate dehydrogenase E1 component subunit beta (327 aa).

Glu-60 lines the thiamine diphosphate pocket. Residues Val-113, Ala-161, Ile-162, and Glu-164 each coordinate K(+).

Heterodimer of an alpha and a beta chain. Thiamine diphosphate is required as a cofactor.

It localises to the plastid. It is found in the chloroplast. The catalysed reaction is N(6)-[(R)-lipoyl]-L-lysyl-[protein] + pyruvate + H(+) = N(6)-[(R)-S(8)-acetyldihydrolipoyl]-L-lysyl-[protein] + CO2. Its function is as follows. The pyruvate dehydrogenase complex catalyzes the overall conversion of pyruvate to acetyl-CoA and CO(2). It contains multiple copies of three enzymatic components: pyruvate dehydrogenase (E1), dihydrolipoamide acetyltransferase (E2) and lipoamide dehydrogenase (E3). The sequence is that of Pyruvate dehydrogenase E1 component subunit beta (pdhB) from Cyanidium caldarium (Red alga).